Here is a 203-residue protein sequence, read N- to C-terminus: Large ribosomal subunit protein bL25 (203 aa).

It belongs to the bacterial ribosomal protein bL25 family. CTC subfamily. In terms of assembly, part of the 50S ribosomal subunit; part of the 5S rRNA/L5/L18/L25 subcomplex. Contacts the 5S rRNA. Binds to the 5S rRNA independently of L5 and L18.

Its function is as follows. This is one of the proteins that binds to the 5S RNA in the ribosome where it forms part of the central protuberance. In Paraburkholderia phymatum (strain DSM 17167 / CIP 108236 / LMG 21445 / STM815) (Burkholderia phymatum), this protein is Large ribosomal subunit protein bL25.